The chain runs to 192 residues: MAP6 domain-containing protein 1 (192 aa).

Residues Cys-5, Cys-10, and Cys-11 are each lipidated (S-palmitoyl cysteine). The segment at 36-106 is disordered; that stretch reads LESEEPIPGG…RTKPSATPGR (71 aa). Ser-38 bears the Phosphoserine mark. A compositionally biased stretch (low complexity) spans 43–58; the sequence is PGGVPSRRGPSPAGSR. 2 mn regions span residues 123 to 136 and 158 to 170; these read TTSYRQEFQAWTGV and DGSPRAGFQAPEV. Ser-160 carries the phosphoserine modification.

Belongs to the STOP family. Interacts with calmodulin. Post-translationally, palmitoylated. Palmitoylation enhances association with microtubules.

Its subcellular location is the golgi apparatus. The protein resides in the cytoplasm. The protein localises to the cytoskeleton. Its function is as follows. May have microtubule-stabilizing activity. The chain is MAP6 domain-containing protein 1 (MAP6D1) from Bos taurus (Bovine).